Consider the following 699-residue polypeptide: 1,4-alpha-glucan-branching enzyme (699 aa).

Residues 59–60 (NE) and 88–90 (WAP) each bind substrate. Residue W104 coordinates (1,4-alpha-D-glucosyl)n. Residue 115–118 (DYGK) coordinates substrate. K140 contributes to the (1,4-alpha-D-glucosyl)n binding site. At Y170 the chain carries Phosphotyrosine. 330-333 (EVLR) serves as a coordination point for substrate. The active-site Nucleophile is the D354. E409 functions as the Proton donor in the catalytic mechanism.

This sequence belongs to the glycosyl hydrolase 13 family. GlgB subfamily. As to quaternary structure, monomer.

The enzyme catalyses Transfers a segment of a (1-&gt;4)-alpha-D-glucan chain to a primary hydroxy group in a similar glucan chain.. It participates in glycan biosynthesis; glycogen biosynthesis. Functionally, glycogen-branching enzyme participates in the glycogen biosynthetic process along with glycogenin and glycogen synthase. Generates alpha-1,6-glucosidic branches from alpha-1,4-linked glucose chains, to increase solubility of the glycogen polymer. In Equus caballus (Horse), this protein is 1,4-alpha-glucan-branching enzyme (GBE1).